The chain runs to 348 residues: MTAQPQVLKIRRPDDWHIHLRDDDMLKTVVPYTSEFYGRAIVMPNLVPPVTTVAAAIAYRQRIMDAVPAGHDFTPLMTCYLTDSLDPAELERGFNEGVFTAAKLYPANATTNSSHGVTSTDAIMPVLERMEKLGMPLLVHGEVTHAEIDIFDREARFIDTVMEPLRQRLPGLKVVFEHITTKDAAEYVRDGNELLAATITPQHLMFNRNHMLVGGIRPHLYCLPVLKRNIHQQALRELVASGFSRAFLGTDSAPHARHRKEASCGCAGCFNAPTALGSYATVFEEMNALQHFEAFCSLNGPRFYGLPVNESYVELVREETTVVDSIALPNDSLVPFLAGETVRWTMKR.

Histidine 17 and histidine 19 together coordinate Zn(2+). Substrate contacts are provided by residues 19 to 21 and asparagine 45; that span reads HLR. Zn(2+)-binding residues include lysine 103, histidine 140, and histidine 178. Lysine 103 is modified (N6-carboxylysine). Histidine 140 is a binding site for substrate. Leucine 223 contacts substrate. Aspartate 251 serves as a coordination point for Zn(2+). The active site involves aspartate 251. Substrate is bound by residues histidine 255 and alanine 267.

The protein belongs to the metallo-dependent hydrolases superfamily. DHOase family. Class II DHOase subfamily. As to quaternary structure, homodimer. Zn(2+) is required as a cofactor.

The catalysed reaction is (S)-dihydroorotate + H2O = N-carbamoyl-L-aspartate + H(+). It functions in the pathway pyrimidine metabolism; UMP biosynthesis via de novo pathway; (S)-dihydroorotate from bicarbonate: step 3/3. In terms of biological role, catalyzes the reversible cyclization of carbamoyl aspartate to dihydroorotate. This Klebsiella pneumoniae (strain 342) protein is Dihydroorotase.